Consider the following 187-residue polypeptide: Elongation factor P (187 aa).

This sequence belongs to the elongation factor P family.

The protein localises to the cytoplasm. It participates in protein biosynthesis; polypeptide chain elongation. In terms of biological role, involved in peptide bond synthesis. Stimulates efficient translation and peptide-bond synthesis on native or reconstituted 70S ribosomes in vitro. Probably functions indirectly by altering the affinity of the ribosome for aminoacyl-tRNA, thus increasing their reactivity as acceptors for peptidyl transferase. This is Elongation factor P from Paenarthrobacter aurescens (strain TC1).